The sequence spans 21 residues: Misgurin (21 aa).

Residues R1–K21 are disordered. The span at F10–K21 shows a compositional bias: basic residues.

It is found in the secreted. In terms of biological role, strong antimicrobial activity against several Gram-positive and Gram-negative bacteria and fungi. The sequence is that of Misgurin from Misgurnus anguillicaudatus (Oriental weatherloach).